The sequence spans 76 residues: Small ribosomal subunit protein bS18 (76 aa).

This sequence belongs to the bacterial ribosomal protein bS18 family. As to quaternary structure, part of the 30S ribosomal subunit. Forms a tight heterodimer with protein bS6.

In terms of biological role, binds as a heterodimer with protein bS6 to the central domain of the 16S rRNA, where it helps stabilize the platform of the 30S subunit. The sequence is that of Small ribosomal subunit protein bS18 from Petrotoga mobilis (strain DSM 10674 / SJ95).